The following is a 201-amino-acid chain: ATP-dependent Clp protease proteolytic subunit (201 aa).

The active-site Nucleophile is Ser98. His123 is an active-site residue.

It belongs to the peptidase S14 family. As to quaternary structure, fourteen ClpP subunits assemble into 2 heptameric rings which stack back to back to give a disk-like structure with a central cavity, resembling the structure of eukaryotic proteasomes.

The protein resides in the cytoplasm. The catalysed reaction is Hydrolysis of proteins to small peptides in the presence of ATP and magnesium. alpha-casein is the usual test substrate. In the absence of ATP, only oligopeptides shorter than five residues are hydrolyzed (such as succinyl-Leu-Tyr-|-NHMec, and Leu-Tyr-Leu-|-Tyr-Trp, in which cleavage of the -Tyr-|-Leu- and -Tyr-|-Trp bonds also occurs).. Functionally, cleaves peptides in various proteins in a process that requires ATP hydrolysis. Has a chymotrypsin-like activity. Plays a major role in the degradation of misfolded proteins. The polypeptide is ATP-dependent Clp protease proteolytic subunit (Rickettsia canadensis (strain McKiel)).